The sequence spans 188 residues: Putative glutamine amidotransferase-like protein YvdE homolog (188 aa).

A Glutamine amidotransferase type-1 domain is found at 17 to 188 (SPFWWNKVSY…IKDLGQGLQA (172 aa)).

The chain is Putative glutamine amidotransferase-like protein YvdE homolog from Lactococcus lactis subsp. cremoris (Streptococcus cremoris).